The primary structure comprises 641 residues: 1-deoxy-D-xylulose-5-phosphate synthase (641 aa).

Thiamine diphosphate is bound by residues H71 and 112 to 114; that span reads SHA. D144 lines the Mg(2+) pocket. Residues 145 to 146, N173, Y284, and E365 contribute to the thiamine diphosphate site; that span reads GA. A Mg(2+)-binding site is contributed by N173.

It belongs to the transketolase family. DXPS subfamily. In terms of assembly, homodimer. Mg(2+) is required as a cofactor. It depends on thiamine diphosphate as a cofactor.

The catalysed reaction is D-glyceraldehyde 3-phosphate + pyruvate + H(+) = 1-deoxy-D-xylulose 5-phosphate + CO2. It functions in the pathway metabolic intermediate biosynthesis; 1-deoxy-D-xylulose 5-phosphate biosynthesis; 1-deoxy-D-xylulose 5-phosphate from D-glyceraldehyde 3-phosphate and pyruvate: step 1/1. In terms of biological role, catalyzes the acyloin condensation reaction between C atoms 2 and 3 of pyruvate and glyceraldehyde 3-phosphate to yield 1-deoxy-D-xylulose-5-phosphate (DXP). This chain is 1-deoxy-D-xylulose-5-phosphate synthase, found in Mycobacterium avium (strain 104).